The sequence spans 688 residues: Elongation factor G (688 aa).

In terms of domain architecture, tr-type G spans 8 to 282; it reads EKFRNIGIMA…AVVDFMPSPL (275 aa). GTP is bound by residues 17–24, 81–85, and 135–138; these read AHIDAGKT, DTPGH, and NKMD. Positions 282 to 305 are disordered; sequence LDIPPIKGTDPETGEETDRPADDN.

It belongs to the TRAFAC class translation factor GTPase superfamily. Classic translation factor GTPase family. EF-G/EF-2 subfamily.

It localises to the cytoplasm. Catalyzes the GTP-dependent ribosomal translocation step during translation elongation. During this step, the ribosome changes from the pre-translocational (PRE) to the post-translocational (POST) state as the newly formed A-site-bound peptidyl-tRNA and P-site-bound deacylated tRNA move to the P and E sites, respectively. Catalyzes the coordinated movement of the two tRNA molecules, the mRNA and conformational changes in the ribosome. In Clostridium kluyveri (strain NBRC 12016), this protein is Elongation factor G.